Here is a 316-residue protein sequence, read N- to C-terminus: 4-hydroxy-3-methylbut-2-enyl diphosphate reductase (316 aa).

Residue C12 participates in [4Fe-4S] cluster binding. Positions 41 and 74 each coordinate (2E)-4-hydroxy-3-methylbut-2-enyl diphosphate. Residues H41 and H74 each coordinate dimethylallyl diphosphate. H41 and H74 together coordinate isopentenyl diphosphate. C96 contacts [4Fe-4S] cluster. Residue H124 participates in (2E)-4-hydroxy-3-methylbut-2-enyl diphosphate binding. H124 provides a ligand contact to dimethylallyl diphosphate. H124 is an isopentenyl diphosphate binding site. E126 (proton donor) is an active-site residue. T167 lines the (2E)-4-hydroxy-3-methylbut-2-enyl diphosphate pocket. C197 provides a ligand contact to [4Fe-4S] cluster. 4 residues coordinate (2E)-4-hydroxy-3-methylbut-2-enyl diphosphate: S225, S226, N227, and S269. Dimethylallyl diphosphate contacts are provided by S225, S226, N227, and S269. S225, S226, N227, and S269 together coordinate isopentenyl diphosphate.

Belongs to the IspH family. In terms of assembly, homodimer. [4Fe-4S] cluster is required as a cofactor.

The enzyme catalyses isopentenyl diphosphate + 2 oxidized [2Fe-2S]-[ferredoxin] + H2O = (2E)-4-hydroxy-3-methylbut-2-enyl diphosphate + 2 reduced [2Fe-2S]-[ferredoxin] + 2 H(+). It carries out the reaction dimethylallyl diphosphate + 2 oxidized [2Fe-2S]-[ferredoxin] + H2O = (2E)-4-hydroxy-3-methylbut-2-enyl diphosphate + 2 reduced [2Fe-2S]-[ferredoxin] + 2 H(+). The protein operates within isoprenoid biosynthesis; dimethylallyl diphosphate biosynthesis; dimethylallyl diphosphate from (2E)-4-hydroxy-3-methylbutenyl diphosphate: step 1/1. It participates in isoprenoid biosynthesis; isopentenyl diphosphate biosynthesis via DXP pathway; isopentenyl diphosphate from 1-deoxy-D-xylulose 5-phosphate: step 6/6. Its function is as follows. Catalyzes the conversion of 1-hydroxy-2-methyl-2-(E)-butenyl 4-diphosphate (HMBPP) into a mixture of isopentenyl diphosphate (IPP) and dimethylallyl diphosphate (DMAPP). Acts in the terminal step of the DOXP/MEP pathway for isoprenoid precursor biosynthesis. This chain is 4-hydroxy-3-methylbut-2-enyl diphosphate reductase, found in Escherichia coli (strain ATCC 8739 / DSM 1576 / NBRC 3972 / NCIMB 8545 / WDCM 00012 / Crooks).